The sequence spans 871 residues: Rho guanine nucleotide exchange factor 26 (871 aa).

Disordered regions lie at residues 1–49, 86–233, and 288–310; these read MDGE…LLIT, AQRR…NPSV, and PLGH…SLRR. Serine 22 bears the Phosphoserine mark. The span at 136-156 shows a compositional bias: pro residues; the sequence is PAPPPPPVLRPPRTPNAPAPC. Positions 173 to 192 are enriched in polar residues; sequence PTANGLAANNDSPGSGSQSG. Serine 392 carries the post-translational modification Phosphoserine. The region spanning 439–623 is the DH domain; the sequence is KRQEAIFEVI…SKLVRLCNEG (185 aa). The region spanning 655–782 is the PH domain; the sequence is WLVKRGELTA…WITALGHSSG (128 aa). Positions 789 to 850 constitute an SH3 domain; that stretch reads TSLTQVEIVR…PMECAKEITC (62 aa).

In terms of assembly, interacts with ICAM1 and RHOG. Isoform 1 is broadly expressed, with highest levels in liver (at protein level). Certain mRNA species appear to be specifically expressed in prostate and liver.

It is found in the cell projection. Its subcellular location is the ruffle. Activates RhoG GTPase by promoting the exchange of GDP by GTP. Required for the formation of membrane ruffles during macropinocytosis. Required for the formation of cup-like structures during trans-endothelial migration of leukocytes. In case of Salmonella enterica infection, activated by SopB, which induces cytoskeleton rearrangements and promotes bacterial entry. This chain is Rho guanine nucleotide exchange factor 26 (ARHGEF26), found in Homo sapiens (Human).